A 355-amino-acid chain; its full sequence is Phosphate acyltransferase (355 aa).

It belongs to the PlsX family. Homodimer. Probably interacts with PlsY.

Its subcellular location is the cytoplasm. The enzyme catalyses a fatty acyl-[ACP] + phosphate = an acyl phosphate + holo-[ACP]. It functions in the pathway lipid metabolism; phospholipid metabolism. Catalyzes the reversible formation of acyl-phosphate (acyl-PO(4)) from acyl-[acyl-carrier-protein] (acyl-ACP). This enzyme utilizes acyl-ACP as fatty acyl donor, but not acyl-CoA. The chain is Phosphate acyltransferase from Azorhizobium caulinodans (strain ATCC 43989 / DSM 5975 / JCM 20966 / LMG 6465 / NBRC 14845 / NCIMB 13405 / ORS 571).